The following is a 693-amino-acid chain: Homeobox protein caupolican (693 aa).

Disordered regions lie at residues 20 to 104, 288 to 331, 387 to 453, 480 to 538, 561 to 627, and 648 to 693; these read TANT…PSRG, NKMT…PGNQ, AQSH…DCGI, YLGQ…PLSM, MHLP…SMHS, and YGHG…RSGS. The segment covering 41-59 has biased composition (low complexity); the sequence is ASLSPSGGSTATGLTAGPL. The segment at residues 226 to 288 is a DNA-binding region (homeobox; TALE-type); sequence LAARRKNATR…NARRRLKKEN (63 aa). 2 stretches are compositionally biased toward basic and acidic residues: residues 288 to 298 and 308 to 317; these read NKMTWEPKNKT and DDEKEKDAGD. Composition is skewed to low complexity over residues 397–419 and 493–515; these read HPQQ…QLQH and QQLP…QQQQ. Basic residues predominate over residues 516–527; it reads QHHHHPHHHHPH. Over residues 609 to 627 the composition is skewed to low complexity; that stretch reads SSGGSSSSSGSSHSSSMHS. Residues 651–675 are compositionally biased toward basic residues; that stretch reads GHSHGHGHGHGHGLGHGHGLGHGHG.

It belongs to the TALE/IRO homeobox family.

It localises to the nucleus. Its function is as follows. Controls proneural and vein forming genes. Positive transcriptional controller of ac-sc (achaete-scute). May act as an activator that interacts with the transcriptional complex assembled on the ac and sc promoters and participates in transcription initiation. This Drosophila melanogaster (Fruit fly) protein is Homeobox protein caupolican (caup).